The following is a 183-amino-acid chain: Translocon-associated protein subunit beta (183 aa).

A signal peptide spans 1 to 17 (MRLLSFVVLALFAVTQA). The Lumenal segment spans residues 18-149 (EEGARLLASK…DRRFSPHFLD (132 aa)). Asn88 and Asn104 each carry an N-linked (GlcNAc...) asparagine glycan. The helical transmembrane segment at 150–169 (WAAFGVMTLPSIGIPLLLWY) threads the bilayer. The Cytoplasmic portion of the chain corresponds to 170 to 183 (SSKRKYDTPKTKKN).

The protein belongs to the TRAP-beta family. Heterotetramer of TRAP-alpha, TRAP-beta, TRAP-delta and TRAP-gamma. Interacts with STING1.

The protein localises to the endoplasmic reticulum membrane. In terms of biological role, TRAP proteins are part of a complex whose function is to bind calcium to the ER membrane and thereby regulate the retention of ER resident proteins. The protein is Translocon-associated protein subunit beta (SSR2) of Homo sapiens (Human).